Reading from the N-terminus, the 301-residue chain is Beta carbonic anhydrase 5, chloroplastic (301 aa).

A chloroplast-targeting transit peptide spans 1–56; that stretch reads MAATPTHFSVSHDPFSSTSLLNLQTQAIFGPNHSLKTTQLRIPASFRRKATNLQVM. A Phosphothreonine modification is found at threonine 65. At serine 128 the chain carries Phosphoserine. The residue at position 231 (cysteine 231) is an S-nitrosocysteine.

This sequence belongs to the beta-class carbonic anhydrase family. In terms of tissue distribution, strongly expressed in aerial tissues including leaves, stems, flowers and siliques.

It is found in the plastid. The protein localises to the chloroplast. It catalyses the reaction hydrogencarbonate + H(+) = CO2 + H2O. Functionally, reversible hydration of carbon dioxide. In Arabidopsis thaliana (Mouse-ear cress), this protein is Beta carbonic anhydrase 5, chloroplastic (BCA5).